Consider the following 325-residue polypeptide: Phospholipid phosphatase-related protein type 1 (325 aa).

N-linked (GlcNAc...) asparagine glycosylation occurs at Asn-5. 3 helical membrane-spanning segments follow: residues 13 to 33 (IIPCFIFVELVIMAGTVLLAY), 67 to 87 (FISPLVLYCVLAATPTAIIFI), and 127 to 147 (FIGVFAFGLFATDIFVNAGQV). Asn-163 carries N-linked (GlcNAc...) asparagine glycosylation. Transmembrane regions (helical) follow at residues 201 to 219 (AALSIYSALYATMYITSTI), 226 to 244 (LAKPVLCLGDLCTAFLTGL), and 257 to 277 (VIAGFILGTAVALFLGMCVVH). At Ser-307 the chain carries Phosphoserine. N-linked (GlcNAc...) asparagine glycosylation is present at Asn-316.

It belongs to the PA-phosphatase related phosphoesterase family. As to expression, highly expressed in the brain. Also found in the liver, kidney and testis. In the brain shows a strongest expression in the hippocampus and cerebellum.

It localises to the cell membrane. The protein localises to the cell projection. The protein resides in the neuron projection. May play a role in neurite outgrowth and neurogenesis. The chain is Phospholipid phosphatase-related protein type 1 from Rattus norvegicus (Rat).